Here is a 467-residue protein sequence, read N- to C-terminus: Glutamate--tRNA ligase (467 aa).

Residues 9–19 (PSPTGYLHIGG) carry the 'HIGH' region motif. The 'KMSKS' region signature appears at 237–241 (KLSKR). K240 provides a ligand contact to ATP.

This sequence belongs to the class-I aminoacyl-tRNA synthetase family. Glutamate--tRNA ligase type 1 subfamily. Monomer.

The protein resides in the cytoplasm. The enzyme catalyses tRNA(Glu) + L-glutamate + ATP = L-glutamyl-tRNA(Glu) + AMP + diphosphate. Catalyzes the attachment of glutamate to tRNA(Glu) in a two-step reaction: glutamate is first activated by ATP to form Glu-AMP and then transferred to the acceptor end of tRNA(Glu). This is Glutamate--tRNA ligase from Xanthomonas oryzae pv. oryzae (strain MAFF 311018).